Reading from the N-terminus, the 1184-residue chain is Non-receptor tyrosine-protein kinase TYK2 (1184 aa).

Residues 33–430 enclose the FERM domain; the sequence is LMVLLHWPGP…GYFRLTADSS (398 aa). The interval 294-368 is disordered; it reads CYIQNSGQTA…KAGEHLTESP (75 aa). A Phosphotyrosine modification is found at Tyr295. An SH2; atypical domain is found at 449–529; that stretch reads GIHGPLMDPF…GRSFASLGDL (81 aa). Ser525 is subject to Phosphoserine. One can recognise a Protein kinase 1 domain in the interval 589–866; that stretch reads ITQLSHLGQG…RTILRDLTRL (278 aa). Position 604 is a phosphotyrosine (Tyr604). The residue at position 881 (Ser881) is a Phosphoserine. The 273-residue stretch at 894–1166 folds into the Protein kinase 2 domain; sequence LKKIRDLGEG…PTFQNLVPIL (273 aa). ATP is bound by residues 900-908 and Lys927; that span reads LGEGHFGKV. Residue Asp1020 is the Proton acceptor of the active site. Tyr1051 is subject to Phosphotyrosine; by autocatalysis. At Tyr1052 the chain carries Phosphotyrosine.

It belongs to the protein kinase superfamily. Tyr protein kinase family. JAK subfamily. Interacts (via FERM domain) with JAKMIP1. Interacts with PIK3R1; this interaction is important for cell migration. Interacts with MPL/TPOR. Phosphorylation by JAK1 at Tyr-1051 and Tyr-1052 induces kinase activation.

It catalyses the reaction L-tyrosyl-[protein] + ATP = O-phospho-L-tyrosyl-[protein] + ADP + H(+). The protein kinase 1 domain (also termed pseudokinase domain) mediates autoinhibition of the TYK2 kinase domain. Its function is as follows. Tyrosine kinase of the non-receptor type involved in numerous cytokines and interferons signaling, which regulates cell growth, development, cell migration, innate and adaptive immunity. Plays both structural and catalytic roles in numerous interleukins and interferons (IFN-alpha/beta) signaling. Associates with heterodimeric cytokine receptor complexes and activates STAT family members including STAT1, STAT3, STAT4 or STAT6. The heterodimeric cytokine receptor complexes are composed of (1) a TYK2-associated receptor chain (IFNAR1, IL12RB1, IL10RB or IL13RA1), and (2) a second receptor chain associated either with JAK1 or JAK2. In response to cytokine-binding to receptors, phosphorylates and activates receptors (IFNAR1, IL12RB1, IL10RB or IL13RA1), creating docking sites for STAT members. In turn, recruited STATs are phosphorylated by TYK2 (or JAK1/JAK2 on the second receptor chain), form homo- and heterodimers, translocate to the nucleus, and regulate cytokine/growth factor responsive genes. Negatively regulates STAT3 activity by promototing phosphorylation at a specific tyrosine that differs from the site used for signaling. This is Non-receptor tyrosine-protein kinase TYK2 from Mus musculus (Mouse).